A 417-amino-acid chain; its full sequence is Serine hydroxymethyltransferase (417 aa).

(6S)-5,6,7,8-tetrahydrofolate is bound by residues L121 and 125-127 (GHL). The residue at position 229 (K229) is an N6-(pyridoxal phosphate)lysine. 354-356 (SPF) is a binding site for (6S)-5,6,7,8-tetrahydrofolate.

It belongs to the SHMT family. Homodimer. It depends on pyridoxal 5'-phosphate as a cofactor.

Its subcellular location is the cytoplasm. The enzyme catalyses (6R)-5,10-methylene-5,6,7,8-tetrahydrofolate + glycine + H2O = (6S)-5,6,7,8-tetrahydrofolate + L-serine. The protein operates within one-carbon metabolism; tetrahydrofolate interconversion. Its pathway is amino-acid biosynthesis; glycine biosynthesis; glycine from L-serine: step 1/1. Its function is as follows. Catalyzes the reversible interconversion of serine and glycine with tetrahydrofolate (THF) serving as the one-carbon carrier. This reaction serves as the major source of one-carbon groups required for the biosynthesis of purines, thymidylate, methionine, and other important biomolecules. Also exhibits THF-independent aldolase activity toward beta-hydroxyamino acids, producing glycine and aldehydes, via a retro-aldol mechanism. The polypeptide is Serine hydroxymethyltransferase (Stutzerimonas stutzeri (strain A1501) (Pseudomonas stutzeri)).